Consider the following 716-residue polypeptide: DNA ligase (716 aa).

NAD(+) contacts are provided by residues 49–53, 98–99, and Glu132; these read DAAYD and SL. Lys134 functions as the N6-AMP-lysine intermediate in the catalytic mechanism. 4 residues coordinate NAD(+): Arg155, Glu192, Lys308, and Lys332. 4 residues coordinate Zn(2+): Cys437, Cys439, Cys461, and Cys467. Residues 638 to 716 enclose the BRCT domain; that stretch reads KRNSPIATKT…EDEWLQLIGE (79 aa).

It belongs to the NAD-dependent DNA ligase family. LigA subfamily. The cofactor is Mg(2+). Mn(2+) serves as cofactor.

It carries out the reaction NAD(+) + (deoxyribonucleotide)n-3'-hydroxyl + 5'-phospho-(deoxyribonucleotide)m = (deoxyribonucleotide)n+m + AMP + beta-nicotinamide D-nucleotide.. In terms of biological role, DNA ligase that catalyzes the formation of phosphodiester linkages between 5'-phosphoryl and 3'-hydroxyl groups in double-stranded DNA using NAD as a coenzyme and as the energy source for the reaction. It is essential for DNA replication and repair of damaged DNA. The sequence is that of DNA ligase from Bradyrhizobium sp. (strain ORS 278).